The following is a 612-amino-acid chain: Dihydroxy-acid dehydratase (612 aa).

D81 lines the Mg(2+) pocket. C122 contacts [2Fe-2S] cluster. Mg(2+) contacts are provided by D123 and K124. K124 bears the N6-carboxylysine mark. C195 lines the [2Fe-2S] cluster pocket. A Mg(2+)-binding site is contributed by E491. The Proton acceptor role is filled by S517.

It belongs to the IlvD/Edd family. As to quaternary structure, homodimer. [2Fe-2S] cluster serves as cofactor. It depends on Mg(2+) as a cofactor.

The enzyme catalyses (2R)-2,3-dihydroxy-3-methylbutanoate = 3-methyl-2-oxobutanoate + H2O. It carries out the reaction (2R,3R)-2,3-dihydroxy-3-methylpentanoate = (S)-3-methyl-2-oxopentanoate + H2O. It participates in amino-acid biosynthesis; L-isoleucine biosynthesis; L-isoleucine from 2-oxobutanoate: step 3/4. It functions in the pathway amino-acid biosynthesis; L-valine biosynthesis; L-valine from pyruvate: step 3/4. Functionally, functions in the biosynthesis of branched-chain amino acids. Catalyzes the dehydration of (2R,3R)-2,3-dihydroxy-3-methylpentanoate (2,3-dihydroxy-3-methylvalerate) into 2-oxo-3-methylpentanoate (2-oxo-3-methylvalerate) and of (2R)-2,3-dihydroxy-3-methylbutanoate (2,3-dihydroxyisovalerate) into 2-oxo-3-methylbutanoate (2-oxoisovalerate), the penultimate precursor to L-isoleucine and L-valine, respectively. The sequence is that of Dihydroxy-acid dehydratase from Sinorhizobium medicae (strain WSM419) (Ensifer medicae).